The primary structure comprises 259 residues: Global transcriptional regulator CodY (259 aa).

Residues 1–155 (MNLLEKTRKI…GATVVGMEIL (155 aa)) are GAF domain. Residues 203 to 222 (ASKIADRVGITRSVIVNALR) constitute a DNA-binding region (H-T-H motif). Serine 215 is subject to Phosphoserine.

Belongs to the CodY family.

The protein localises to the cytoplasm. Functionally, DNA-binding global transcriptional regulator which is involved in the adaptive response to starvation and acts by directly or indirectly controlling the expression of numerous genes in response to nutrient availability. During rapid exponential growth, CodY is highly active and represses genes whose products allow adaptation to nutrient depletion. This chain is Global transcriptional regulator CodY, found in Geobacillus thermodenitrificans (strain NG80-2).